The sequence spans 37 residues: Photosystem II reaction center protein M (37 aa).

Residues I5–I25 traverse the membrane as a helical segment.

The protein belongs to the PsbM family. In terms of assembly, PSII is composed of 1 copy each of membrane proteins PsbA, PsbB, PsbC, PsbD, PsbE, PsbF, PsbH, PsbI, PsbJ, PsbK, PsbL, PsbM, PsbT, PsbX, PsbY, PsbZ, Psb30/Ycf12, at least 3 peripheral proteins of the oxygen-evolving complex and a large number of cofactors. It forms dimeric complexes.

The protein resides in the plastid. Its subcellular location is the chloroplast thylakoid membrane. In terms of biological role, one of the components of the core complex of photosystem II (PSII). PSII is a light-driven water:plastoquinone oxidoreductase that uses light energy to abstract electrons from H(2)O, generating O(2) and a proton gradient subsequently used for ATP formation. It consists of a core antenna complex that captures photons, and an electron transfer chain that converts photonic excitation into a charge separation. This subunit is found at the monomer-monomer interface. In Pelargonium hortorum (Common geranium), this protein is Photosystem II reaction center protein M.